A 189-amino-acid polypeptide reads, in one-letter code: Threonylcarbamoyl-AMP synthase (189 aa).

The YrdC-like domain occupies 7 to 189 (NPRVNYAANM…LLTGQVVRPS (183 aa)).

It belongs to the SUA5 family. TsaC subfamily.

The protein localises to the cytoplasm. It carries out the reaction L-threonine + hydrogencarbonate + ATP = L-threonylcarbamoyladenylate + diphosphate + H2O. Functionally, required for the formation of a threonylcarbamoyl group on adenosine at position 37 (t(6)A37) in tRNAs that read codons beginning with adenine. Catalyzes the conversion of L-threonine, HCO(3)(-)/CO(2) and ATP to give threonylcarbamoyl-AMP (TC-AMP) as the acyladenylate intermediate, with the release of diphosphate. This Cellvibrio japonicus (strain Ueda107) (Pseudomonas fluorescens subsp. cellulosa) protein is Threonylcarbamoyl-AMP synthase.